The following is a 940-amino-acid chain: Isoleucine--tRNA ligase (940 aa).

The 'HIGH' region motif lies at 58–68; that stretch reads PYANGSIHIGH. E564 contributes to the L-isoleucyl-5'-AMP binding site. The 'KMSKS' region motif lies at 605–609; that stretch reads KMSKS. Position 608 (K608) interacts with ATP. C903, C906, C923, and C926 together coordinate Zn(2+).

This sequence belongs to the class-I aminoacyl-tRNA synthetase family. IleS type 1 subfamily. As to quaternary structure, monomer. The cofactor is Zn(2+).

The protein resides in the cytoplasm. The catalysed reaction is tRNA(Ile) + L-isoleucine + ATP = L-isoleucyl-tRNA(Ile) + AMP + diphosphate. Catalyzes the attachment of isoleucine to tRNA(Ile). As IleRS can inadvertently accommodate and process structurally similar amino acids such as valine, to avoid such errors it has two additional distinct tRNA(Ile)-dependent editing activities. One activity is designated as 'pretransfer' editing and involves the hydrolysis of activated Val-AMP. The other activity is designated 'posttransfer' editing and involves deacylation of mischarged Val-tRNA(Ile). The protein is Isoleucine--tRNA ligase of Shewanella amazonensis (strain ATCC BAA-1098 / SB2B).